The primary structure comprises 180 residues: ATP-dependent protease subunit HslV (180 aa).

Residue Thr5 is part of the active site. Residues Gly161, Cys164, and Thr167 each coordinate Na(+).

The protein belongs to the peptidase T1B family. HslV subfamily. A double ring-shaped homohexamer of HslV is capped on each side by a ring-shaped HslU homohexamer. The assembly of the HslU/HslV complex is dependent on binding of ATP.

It localises to the cytoplasm. It catalyses the reaction ATP-dependent cleavage of peptide bonds with broad specificity.. With respect to regulation, allosterically activated by HslU binding. Its function is as follows. Protease subunit of a proteasome-like degradation complex believed to be a general protein degrading machinery. The protein is ATP-dependent protease subunit HslV of Campylobacter jejuni subsp. doylei (strain ATCC BAA-1458 / RM4099 / 269.97).